We begin with the raw amino-acid sequence, 822 residues long: Anaphase-promoting complex subunit 2 (822 aa).

5 positions are modified to phosphoserine: serine 218, serine 314, serine 470, serine 534, and serine 697. The tract at residues 450–495 is disordered; the sequence is GDLAVELSKTDPASLETGQDSEDDSGEPEDWVPDPVDADPGKSSSK. The segment covering 468-481 has biased composition (acidic residues); sequence QDSEDDSGEPEDWV. The segment at 502 to 700 is cullin homology; sequence ISLLVSIYGS…LLRRRMSVWL (199 aa). Tyrosine 810 carries the phosphotyrosine modification.

The protein belongs to the cullin family. In terms of assembly, the mammalian APC/C is composed at least of 14 distinct subunits ANAPC1, ANAPC2, CDC27/APC3, ANAPC4, ANAPC5, CDC16/APC6, ANAPC7, CDC23/APC8, ANAPC10, ANAPC11, CDC26/APC12, ANAPC13, ANAPC15 and ANAPC16 that assemble into a complex of at least 19 chains with a combined molecular mass of around 1.2 MDa; APC/C interacts with FZR1 and FBXO5. In the context of the APC/C complex, directly interacts with UBE2C and UBE2S. Interacts (via cullin domain) with ANAPC11 and with UBCH10. Interacts with NEUROD2. Interacts with FBXO43; the interaction is direct.

Its pathway is protein modification; protein ubiquitination. Functionally, together with the RING-H2 protein ANAPC11, constitutes the catalytic component of the anaphase promoting complex/cyclosome (APC/C), a cell cycle-regulated E3 ubiquitin ligase that controls progression through mitosis and the G1 phase of the cell cycle. The APC/C complex acts by mediating ubiquitination and subsequent degradation of target proteins: it mainly mediates the formation of 'Lys-11'-linked polyubiquitin chains and, to a lower extent, the formation of 'Lys-48'- and 'Lys-63'-linked polyubiquitin chains. The APC/C complex catalyzes assembly of branched 'Lys-11'-/'Lys-48'-linked branched ubiquitin chains on target proteins. The CDC20-APC/C complex positively regulates the formation of synaptic vesicle clustering at active zone to the presynaptic membrane in postmitotic neurons. CDC20-APC/C-induced degradation of NEUROD2 drives presynaptic differentiation. The polypeptide is Anaphase-promoting complex subunit 2 (ANAPC2) (Homo sapiens (Human)).